A 427-amino-acid polypeptide reads, in one-letter code: Trigger factor (427 aa).

Residues 163 to 248 (GDTVVIDFVG…IHEVKTKEVP (86 aa)) enclose the PPIase FKBP-type domain.

The protein belongs to the FKBP-type PPIase family. Tig subfamily.

The protein localises to the cytoplasm. It catalyses the reaction [protein]-peptidylproline (omega=180) = [protein]-peptidylproline (omega=0). Functionally, involved in protein export. Acts as a chaperone by maintaining the newly synthesized protein in an open conformation. Functions as a peptidyl-prolyl cis-trans isomerase. The sequence is that of Trigger factor (tig) from Streptococcus pyogenes serotype M1.